The chain runs to 170 residues: Peptide deformylase (170 aa).

Cys91 and His133 together coordinate Fe cation. The active site involves Glu134. His137 provides a ligand contact to Fe cation.

Belongs to the polypeptide deformylase family. It depends on Fe(2+) as a cofactor.

The enzyme catalyses N-terminal N-formyl-L-methionyl-[peptide] + H2O = N-terminal L-methionyl-[peptide] + formate. Removes the formyl group from the N-terminal Met of newly synthesized proteins. Requires at least a dipeptide for an efficient rate of reaction. N-terminal L-methionine is a prerequisite for activity but the enzyme has broad specificity at other positions. This is Peptide deformylase from Yersinia enterocolitica serotype O:8 / biotype 1B (strain NCTC 13174 / 8081).